Here is a 111-residue protein sequence, read N- to C-terminus: ASFDEAPPGNSKAGEKIFKTKCAQCHTVDKGAGHKQGPNLNGLFGRQSGTTPGYSYSAANKNRAVIWEEKTLYDYLLNPKKYIPGTKMVFPGLKKPQDRADLIAYLKEATA.

N-acetylalanine is present on alanine 1. Positions 22, 25, and 26 each coordinate heme c. N6,N6,N6-trimethyllysine is present on lysine 80. Methionine 88 is a heme c binding site. The residue at position 94 (lysine 94) is an N6,N6,N6-trimethyllysine.

The protein belongs to the cytochrome c family. Post-translationally, binds 1 heme c group covalently per subunit.

The protein localises to the mitochondrion intermembrane space. Functionally, electron carrier protein. The oxidized form of the cytochrome c heme group can accept an electron from the heme group of the cytochrome c1 subunit of cytochrome reductase. Cytochrome c then transfers this electron to the cytochrome oxidase complex, the final protein carrier in the mitochondrial electron-transport chain. The polypeptide is Cytochrome c (Cucurbita maxima (Pumpkin)).